The following is a 356-amino-acid chain: Dihydroorotate dehydrogenase (quinone) (356 aa).

FMN-binding positions include 68–72 (AGFDK) and Thr92. Lys72 is a substrate binding site. 117-121 (NRMGF) serves as a coordination point for substrate. FMN contacts are provided by Asn145 and Asn178. Residue Asn178 coordinates substrate. The Nucleophile role is filled by Ser181. Residue Asn183 participates in substrate binding. The FMN site is built by Lys214 and Thr242. Residue 243 to 244 (NT) coordinates substrate. FMN is bound by residues Gly266, Gly295, and 316–317 (YT).

Belongs to the dihydroorotate dehydrogenase family. Type 2 subfamily. As to quaternary structure, monomer. FMN is required as a cofactor.

Its subcellular location is the cell membrane. It carries out the reaction (S)-dihydroorotate + a quinone = orotate + a quinol. The protein operates within pyrimidine metabolism; UMP biosynthesis via de novo pathway; orotate from (S)-dihydroorotate (quinone route): step 1/1. In terms of biological role, catalyzes the conversion of dihydroorotate to orotate with quinone as electron acceptor. This is Dihydroorotate dehydrogenase (quinone) from Mycobacterium sp. (strain KMS).